A 294-amino-acid chain; its full sequence is Farnesyl diphosphate synthase (294 aa).

Isopentenyl diphosphate contacts are provided by Lys45, Arg48, and His77. Residues Asp84 and Asp90 each contribute to the Mg(2+) site. (2E)-geranyl diphosphate is bound at residue Arg95. Position 96 (Arg96) interacts with isopentenyl diphosphate. Residues Lys181, Thr182, and Gln220 each contribute to the (2E)-geranyl diphosphate site.

Belongs to the FPP/GGPP synthase family. The cofactor is Mg(2+).

It is found in the cytoplasm. The enzyme catalyses isopentenyl diphosphate + (2E)-geranyl diphosphate = (2E,6E)-farnesyl diphosphate + diphosphate. The sequence is that of Farnesyl diphosphate synthase (ispA) from Buchnera aphidicola subsp. Schizaphis graminum (strain Sg).